A 385-amino-acid chain; its full sequence is Linearmycin resistance permease protein LnrN (385 aa).

Transmembrane regions (helical) follow at residues 22 to 42, 198 to 218, 239 to 259, 274 to 294, 305 to 325, and 360 to 380; these read YLIM…MLSG, AAGF…GTIL, IGAG…GILL, AAVI…GLMI, LAFG…YWPI, and DILG…AAGL. In terms of domain architecture, ABC transmembrane type-2 spans 163-382; that stretch reads KTVFAKKHED…AITFAAGLKA (220 aa).

This sequence belongs to the ABC-2 integral membrane protein family. The complex is composed of two ATP-binding proteins (LnrL) and two transmembrane proteins (LnrM and LnrN).

The protein localises to the cell membrane. In terms of biological role, required for resistance to linearmycins, a family of antibiotic-specialized metabolites produced by some streptomycetes. Part of the ABC transporter complex LnrLMN that probably facilitates linearmycin removal from the membrane. Responsible for the translocation of the substrate across the membrane. Also mediates KinC-dependent biofilm morphology. This Bacillus subtilis (strain 168) protein is Linearmycin resistance permease protein LnrN.